Consider the following 352-residue polypeptide: D-alanine--D-alanine ligase A (352 aa).

One can recognise an ATP-grasp domain in the interval 138 to 341 (KRMVQSAGLV…PPKLVGALVE (204 aa)). 165-220 (ECLGSSTLFVKPATSGSSIGVSRVSNALEYAAAFAIAAREDTKVLVEAAVCGREIE) is an ATP binding site. Mg(2+) contacts are provided by D295, E308, and N310.

This sequence belongs to the D-alanine--D-alanine ligase family. Requires Mg(2+) as cofactor. Mn(2+) serves as cofactor.

Its subcellular location is the cytoplasm. The enzyme catalyses 2 D-alanine + ATP = D-alanyl-D-alanine + ADP + phosphate + H(+). It functions in the pathway cell wall biogenesis; peptidoglycan biosynthesis. Its function is as follows. Cell wall formation. The protein is D-alanine--D-alanine ligase A of Pseudomonas putida (strain ATCC 47054 / DSM 6125 / CFBP 8728 / NCIMB 11950 / KT2440).